The chain runs to 234 residues: Urease accessory protein UreF (234 aa).

This sequence belongs to the UreF family. In terms of assembly, ureD, UreF and UreG form a complex that acts as a GTP-hydrolysis-dependent molecular chaperone, activating the urease apoprotein by helping to assemble the nickel containing metallocenter of UreC. The UreE protein probably delivers the nickel.

The protein localises to the cytoplasm. Its function is as follows. Required for maturation of urease via the functional incorporation of the urease nickel metallocenter. The polypeptide is Urease accessory protein UreF (Kocuria rhizophila (strain ATCC 9341 / DSM 348 / NBRC 103217 / DC2201)).